The sequence spans 196 residues: Probable malonic semialdehyde reductase RutE (196 aa).

This sequence belongs to the nitroreductase family. HadB/RutE subfamily. Requires FMN as cofactor.

It carries out the reaction 3-hydroxypropanoate + NADP(+) = 3-oxopropanoate + NADPH + H(+). Its function is as follows. May reduce toxic product malonic semialdehyde to 3-hydroxypropionic acid, which is excreted. This is Probable malonic semialdehyde reductase RutE from Klebsiella pneumoniae subsp. pneumoniae (strain ATCC 700721 / MGH 78578).